The following is a 32-amino-acid chain: Ferredoxin (32 aa).

Residues 3–32 (YKVRLLSEAEGIDVTIDCADDVYILDAAEE) form the 2Fe-2S ferredoxin-type domain.

Belongs to the 2Fe2S plant-type ferredoxin family. The cofactor is [2Fe-2S] cluster.

The protein resides in the plastid. The protein localises to the chloroplast. Its function is as follows. Ferredoxins are iron-sulfur proteins that transfer electrons in a wide variety of metabolic reactions. This Porphyridium purpureum (Red alga) protein is Ferredoxin.